The following is a 396-amino-acid chain: Elongation factor Tu (396 aa).

The region spanning 10–206 (KPHVNVGTIG…ALDSYIPEPE (197 aa)) is the tr-type G domain. Residues 19-26 (GHVDHGKT) are G1. 19–26 (GHVDHGKT) serves as a coordination point for GTP. Threonine 26 is a Mg(2+) binding site. The interval 60–64 (GITIN) is G2. The G3 stretch occupies residues 81–84 (DCPG). Residues 81-85 (DCPGH) and 136-139 (NKCD) each bind GTP. The segment at 136-139 (NKCD) is G4. Residues 174–176 (SAL) are G5.

It belongs to the TRAFAC class translation factor GTPase superfamily. Classic translation factor GTPase family. EF-Tu/EF-1A subfamily. In terms of assembly, monomer.

The protein resides in the cytoplasm. It carries out the reaction GTP + H2O = GDP + phosphate + H(+). Functionally, GTP hydrolase that promotes the GTP-dependent binding of aminoacyl-tRNA to the A-site of ribosomes during protein biosynthesis. The sequence is that of Elongation factor Tu from Acinetobacter baumannii (strain ATCC 17978 / DSM 105126 / CIP 53.77 / LMG 1025 / NCDC KC755 / 5377).